Consider the following 240-residue polypeptide: DNA repair protein RecO (240 aa).

The protein belongs to the RecO family.

Its function is as follows. Involved in DNA repair and RecF pathway recombination. The chain is DNA repair protein RecO from Wolbachia pipientis wMel.